The following is a 178-amino-acid chain: Flagellar transcriptional regulator FlhC (178 aa).

The Zn(2+) site is built by Cys138, Cys141, Cys158, and Cys161.

Belongs to the FlhC family. As to quaternary structure, heterohexamer composed of two FlhC and four FlhD subunits. Each FlhC binds a FlhD dimer, forming a heterotrimer, and a hexamer assembles by dimerization of two heterotrimers. Zn(2+) serves as cofactor.

The protein localises to the cytoplasm. Its function is as follows. Functions in complex with FlhD as a master transcriptional regulator that regulates transcription of several flagellar and non-flagellar operons by binding to their promoter region. Activates expression of class 2 flagellar genes, including fliA, which is a flagellum-specific sigma factor that turns on the class 3 genes. Also regulates genes whose products function in a variety of physiological pathways. This is Flagellar transcriptional regulator FlhC from Erwinia tasmaniensis (strain DSM 17950 / CFBP 7177 / CIP 109463 / NCPPB 4357 / Et1/99).